Here is a 332-residue protein sequence, read N- to C-terminus: Cell growth regulator with RING finger domain protein 1 (332 aa).

The RING-type zinc finger occupies 274–309 (CVVCQNGGVNWVLLPCRHACLCDSCVCYFKQCPMCR).

In terms of tissue distribution, highly expressed in testis, lower levels of expression is seen in skeletal muscle, liver, lung and brain.

It localises to the nucleus. Its subcellular location is the endoplasmic reticulum. Able to inhibit growth in several cell lines. This is Cell growth regulator with RING finger domain protein 1 (Cgrrf1) from Rattus norvegicus (Rat).